Here is a 435-residue protein sequence, read N- to C-terminus: MTDFSPREIVSELDRYIVGQNDAKRAVAIALRNRWRRLKLEGAMREEVLPKNILMIGPTGCGKTEIARRLAKLANAPFLKVEATKFTEVGYVGRDVEQIIRDLVETAIVMVKAEKRKSLEAKAHQSVEERLLDALVGANAAQTTRDSFRKKLRDGDLEDKEIEIELAQATGNLPMFDLPNMPGAAVGAISIGDIFAKSLGRSTKRRRSTVKEAREPLLAEESEKLMDQEQIIAQAIHSVENNGIVFLDEIDKICAREGRGGADVSREGVQRDLLPLIEGTSVATKHGTIKTDHILFIASGAFHVAKPSDLLPELQGRLPIRVELLPLNEEDFRRILTETEVSLIKQYEALLATEGVNLVFTPEAVSSLAKVAVQVNSSVENIGARRLQTVMERVLDEVSYTAPDRSGQTITIDAAYVEKNIGDLAKNTDLSRFIL.

ATP is bound by residues V18, 60 to 65 (GCGKTE), D248, E313, and R385.

It belongs to the ClpX chaperone family. HslU subfamily. A double ring-shaped homohexamer of HslV is capped on each side by a ring-shaped HslU homohexamer. The assembly of the HslU/HslV complex is dependent on binding of ATP.

The protein resides in the cytoplasm. In terms of biological role, ATPase subunit of a proteasome-like degradation complex; this subunit has chaperone activity. The binding of ATP and its subsequent hydrolysis by HslU are essential for unfolding of protein substrates subsequently hydrolyzed by HslV. HslU recognizes the N-terminal part of its protein substrates and unfolds these before they are guided to HslV for hydrolysis. The sequence is that of ATP-dependent protease ATPase subunit HslU from Beijerinckia indica subsp. indica (strain ATCC 9039 / DSM 1715 / NCIMB 8712).